We begin with the raw amino-acid sequence, 137 residues long: Nucleoside diphosphate kinase (137 aa).

Residues Lys-9, Phe-58, Arg-86, Thr-92, Arg-103, and Asn-113 each contribute to the ATP site. The Pros-phosphohistidine intermediate role is filled by His-121.

It belongs to the NDK family. In terms of assembly, homotetramer. Mg(2+) is required as a cofactor.

It is found in the cytoplasm. It carries out the reaction a 2'-deoxyribonucleoside 5'-diphosphate + ATP = a 2'-deoxyribonucleoside 5'-triphosphate + ADP. It catalyses the reaction a ribonucleoside 5'-diphosphate + ATP = a ribonucleoside 5'-triphosphate + ADP. Major role in the synthesis of nucleoside triphosphates other than ATP. The ATP gamma phosphate is transferred to the NDP beta phosphate via a ping-pong mechanism, using a phosphorylated active-site intermediate. In Streptococcus pneumoniae (strain Hungary19A-6), this protein is Nucleoside diphosphate kinase.